Here is a 479-residue protein sequence, read N- to C-terminus: Kynurenine 3-monooxygenase (479 aa).

It belongs to the aromatic-ring hydroxylase family. KMO subfamily. FAD is required as a cofactor.

It is found in the mitochondrion outer membrane. It catalyses the reaction L-kynurenine + NADPH + O2 + H(+) = 3-hydroxy-L-kynurenine + NADP(+) + H2O. It participates in cofactor biosynthesis; NAD(+) biosynthesis; quinolinate from L-kynurenine: step 1/3. Functionally, catalyzes the hydroxylation of L-kynurenine (L-Kyn) to form 3-hydroxy-L-kynurenine (L-3OHKyn). Required for synthesis of quinolinic acid. The protein is Kynurenine 3-monooxygenase of Chaetomium globosum (strain ATCC 6205 / CBS 148.51 / DSM 1962 / NBRC 6347 / NRRL 1970) (Soil fungus).